A 348-amino-acid polypeptide reads, in one-letter code: Zinc transporter ZIP13 (348 aa).

Residues 1 to 45 (MMIQTAVAQAKTAPAGPGPWSIKDLVDLQYLDELMSIDNLDVWFC) lie on the Cytoplasmic side of the membrane. A helical membrane pass occupies residues 46–66 (SLVGSIAIGLSGIFPLLVIPI). The Lumenal portion of the chain corresponds to 67–83 (EAGTALKTEAGCQKLKK). The chain crosses the membrane as a helical span at residues 84–104 (LLSFAIGGLLGDVFLHLLPEA). At 105-118 (WAYTSSPGGSHRHY) the chain is on the cytoplasmic side. A helical membrane pass occupies residues 119–139 (CTQGLWVIGGLMSFLTLEKMF). Topologically, residues 140–219 (PDEVGDPETK…CIDNFTHGLA (80 aa)) are lumenal. A disordered region spans residues 144–192 (GDPETKTSFQRTTSSSSDLSSQFSVSPQTNGICSNNNSDSKPKTDISPY). Over residues 149–169 (KTSFQRTTSSSSDLSSQFSVS) the composition is skewed to low complexity. Polar residues predominate over residues 170–182 (PQTNGICSNNNSD). The helical transmembrane segment at 220-240 (VAGSFLVSRKVGFLTTFAILL) threads the bilayer. The short motif at 241–246 (HEIPHE) is the XEXPHE-motif element. The Cytoplasmic portion of the chain corresponds to 241–262 (HEIPHEVGDFAILLRAGFDRWK). A helical membrane pass occupies residues 263 to 283 (AARMQLSTALGGVLGACFALC). At 284-294 (SQSQHGAENAT) the chain is on the lumenal side. Residues 295–315 (TWILPFTSGGFLYIALVNVVP) traverse the membrane as a helical segment. Over 316–326 (DLLEETNPRNS) the chain is Cytoplasmic. The helical transmembrane segment at 327-347 (LLQVLLLFSGIGVMALLSIAM) threads the bilayer. Asp-348 is a topological domain (lumenal).

It belongs to the ZIP transporter (TC 2.A.5) family. As to quaternary structure, homodimer.

The protein localises to the golgi apparatus membrane. It is found in the cytoplasmic vesicle membrane. Its subcellular location is the endoplasmic reticulum membrane. It carries out the reaction Zn(2+)(in) = Zn(2+)(out). In terms of biological role, functions as a zinc transporter transporting Zn(2+) from the Golgi apparatus to the cytosol and thus influences the zinc level at least in areas of the cytosol. This is Zinc transporter ZIP13 from Danio rerio (Zebrafish).